The following is a 94-amino-acid chain: uncharacterized protein (94 aa).

This is an uncharacterized protein from Rickettsia prowazekii (strain Madrid E).